The following is a 148-amino-acid chain: Ubiquitin-like protein 4A (148 aa).

Positions 1 to 76 constitute a Ubiquitin-like domain; it reads MQLTVKALKG…LNLMVKDQVA (76 aa).

In terms of assembly, component of the bag6/bat3 complex.

The protein localises to the cytoplasm. Its subcellular location is the cytosol. The protein resides in the nucleus. In terms of biological role, as part of a cytosolic protein quality control complex, the bag6/bat3 complex, maintains misfolded and hydrophobic patches-containing proteins in a soluble state and participates in their proper delivery to the endoplasmic reticulum or alternatively can promote their sorting to the proteasome where they undergo degradation. The bag6/bat3 complex is involved in the post-translational delivery of tail-anchored/type II transmembrane proteins to the endoplasmic reticulum membrane. Similarly, the bag6/bat3 complex also functions as a sorting platform for proteins of the secretory pathway that are mislocalized to the cytosol either delivering them to the proteasome for degradation or to the endoplasmic reticulum. The bag6/bat3 complex also plays a role in the endoplasmic reticulum-associated degradation (ERAD), a quality control mechanism that eliminates unwanted proteins of the endoplasmic reticulum through their retrotranslocation to the cytosol and their targeting to the proteasome. It maintains these retrotranslocated proteins in an unfolded yet soluble state condition in the cytosol to ensure their proper delivery to the proteasome. The chain is Ubiquitin-like protein 4A (ubl4a) from Xenopus laevis (African clawed frog).